The sequence spans 407 residues: Arginine biosynthesis bifunctional protein ArgJ (407 aa).

Residues Thr157, Lys183, Thr194, Glu280, Asn402, and Thr407 each contribute to the substrate site. Catalysis depends on Thr194, which acts as the Nucleophile.

This sequence belongs to the ArgJ family. Heterotetramer of two alpha and two beta chains.

Its subcellular location is the cytoplasm. It catalyses the reaction N(2)-acetyl-L-ornithine + L-glutamate = N-acetyl-L-glutamate + L-ornithine. It carries out the reaction L-glutamate + acetyl-CoA = N-acetyl-L-glutamate + CoA + H(+). It functions in the pathway amino-acid biosynthesis; L-arginine biosynthesis; L-ornithine and N-acetyl-L-glutamate from L-glutamate and N(2)-acetyl-L-ornithine (cyclic): step 1/1. It participates in amino-acid biosynthesis; L-arginine biosynthesis; N(2)-acetyl-L-ornithine from L-glutamate: step 1/4. Catalyzes two activities which are involved in the cyclic version of arginine biosynthesis: the synthesis of N-acetylglutamate from glutamate and acetyl-CoA as the acetyl donor, and of ornithine by transacetylation between N(2)-acetylornithine and glutamate. This chain is Arginine biosynthesis bifunctional protein ArgJ, found in Bacillus anthracis.